A 480-amino-acid chain; its full sequence is Glutarate-semialdehyde dehydrogenase (480 aa).

NADP(+)-binding positions include 156-157, 180-183, and 233-234; these read WN, KPAS, and GS. Catalysis depends on Glu-255, which acts as the Proton acceptor. Leu-256 contributes to the NADP(+) binding site. Cys-289 serves as the catalytic Nucleophile. Residue Glu-384 coordinates NADP(+).

Belongs to the aldehyde dehydrogenase family.

The enzyme catalyses 5-oxopentanoate + NADP(+) + H2O = glutarate + NADPH + 2 H(+). It participates in amino-acid degradation. Catalyzes the conversion of 5-oxopentanoate (glutarate semialdehyde) to glutarate. Involved in L-lysine degradation. This Pseudomonas putida (strain ATCC 47054 / DSM 6125 / CFBP 8728 / NCIMB 11950 / KT2440) protein is Glutarate-semialdehyde dehydrogenase.